A 37-amino-acid chain; its full sequence is Mau operon transcriptional activator (37 aa).

The protein belongs to the LysR transcriptional regulatory family.

Its function is as follows. Transcriptional activator of the mau genes involved in methylamine metabolism. The protein is Mau operon transcriptional activator (mauR) of Paracoccus versutus (Thiobacillus versutus).